We begin with the raw amino-acid sequence, 118 residues long: Small ribosomal subunit protein uS13 (118 aa).

The tract at residues G94–K118 is disordered.

The protein belongs to the universal ribosomal protein uS13 family. Part of the 30S ribosomal subunit. Forms a loose heterodimer with protein S19. Forms two bridges to the 50S subunit in the 70S ribosome.

Its function is as follows. Located at the top of the head of the 30S subunit, it contacts several helices of the 16S rRNA. In the 70S ribosome it contacts the 23S rRNA (bridge B1a) and protein L5 of the 50S subunit (bridge B1b), connecting the 2 subunits; these bridges are implicated in subunit movement. Contacts the tRNAs in the A and P-sites. The protein is Small ribosomal subunit protein uS13 of Salmonella paratyphi A (strain ATCC 9150 / SARB42).